Consider the following 455-residue polypeptide: Adhesin YadA (455 aa).

Positions 1–25 (MTKDFKISVSAALISALFSSPYAFA) are cleaved as a signal peptide. The tract at residues 26–363 (DDYDGIPNLT…KKAIRESNQY (338 aa)) is surface exposed passenger domain. The stretch at 209–243 (VNVAQLKKEIEKTQENTNKRSAELLANANAYADNK) forms a coiled coil. An outer membrane translocation of the passenger domain region spans residues 364–402 (TDHKFRQLDNRLDKLDTRVDKGLASSAALNSLFQPYGVG). Transmembrane regions (beta stranded) follow at residues 402–412 (GKVNFTAGVGG), 416–427 (SQALAIGSGYRV), 434–440 (KAGVAYA), and 444–455 (DVMYNASFNIEW). Residues 403–455 (KVNFTAGVGGYRSSQALAIGSGYRVNENVALKAGVAYAGSSDVMYNASFNIEW) are translocator domain.

The protein belongs to the autotransporter-2 (AT-2) (TC 1.B.40) family. In terms of assembly, homotrimer; in gels migrates as monomers, dimers and homotrimers. Does not form trimers with distantly related EibA from E.coli; coexpression was lethal and one of the genes is eliminated in vivo. If the full translocator domain (368-455) is exchanged with that of EibA ('299-392'), will form heterotrimers with EibA and vice-versa.

The protein localises to the cell surface. It is found in the cell outer membrane. Its function is as follows. Collagen-binding outer membrane protein forming a fibrillar matrix on the bacterial cell surface. Promotes initial attachment and invasion of eukaryotic cells. Also protects the bacteria by being responsible for agglutination, serum resistance, complement inactivation and phagocytosis resistance. The polypeptide is Adhesin YadA (yadA) (Yersinia enterocolitica).